Here is a 143-residue protein sequence, read N- to C-terminus: Large ribosomal subunit protein uL11 (143 aa).

This sequence belongs to the universal ribosomal protein uL11 family. In terms of assembly, part of the ribosomal stalk of the 50S ribosomal subunit. Interacts with L10 and the large rRNA to form the base of the stalk. L10 forms an elongated spine to which L12 dimers bind in a sequential fashion forming a multimeric L10(L12)X complex. In terms of processing, one or more lysine residues are methylated.

Its function is as follows. Forms part of the ribosomal stalk which helps the ribosome interact with GTP-bound translation factors. This is Large ribosomal subunit protein uL11 from Methylococcus capsulatus (strain ATCC 33009 / NCIMB 11132 / Bath).